The sequence spans 360 residues: Peptide chain release factor 1 (360 aa).

Residue Q235 is modified to N5-methylglutamine. Over residues D280–T293 the composition is skewed to basic and acidic residues. The disordered stretch occupies residues D280 to S300.

It belongs to the prokaryotic/mitochondrial release factor family. Methylated by PrmC. Methylation increases the termination efficiency of RF1.

The protein localises to the cytoplasm. In terms of biological role, peptide chain release factor 1 directs the termination of translation in response to the peptide chain termination codons UAG and UAA. In Paraburkholderia phytofirmans (strain DSM 17436 / LMG 22146 / PsJN) (Burkholderia phytofirmans), this protein is Peptide chain release factor 1.